Consider the following 1362-residue polypeptide: Integrator complex subunit 2 homolog (1362 aa).

The span at 1 to 10 shows a compositional bias: low complexity; that stretch reads MITSNNNNKN. Disordered regions lie at residues 1-20, 629-660, and 928-963; these read MITS…EMKS, TTGT…SSPN, and NNNK…EEEE. Basic and acidic residues predominate over residues 945–955; the sequence is DDVKMKDKEKE.

It belongs to the Integrator subunit 2 family. In terms of assembly, component of the Integrator complex. The core complex associates with protein phosphatase 2A subunits, to form the Integrator-PP2A (INTAC) complex.

It localises to the nucleus. It is found in the cytoplasm. Functionally, component of the integrator complex, a multiprotein complex that terminates RNA polymerase II (Pol II) transcription in the promoter-proximal region of genes. The integrator complex provides a quality checkpoint during transcription elongation by driving premature transcription termination of transcripts that are unfavorably configured for transcriptional elongation: the complex terminates transcription by (1) catalyzing dephosphorylation of the C-terminal domain (CTD) of Pol II subunit polr2a, (2) degrading the exiting nascent RNA transcript via endonuclease activity and (3) promoting the release of Pol II from bound DNA. The integrator complex is also involved in terminating the synthesis of non-coding Pol II transcripts, such as enhancer RNAs (eRNAs), small nuclear RNAs (snRNAs), telomerase RNAs and long non-coding RNAs (lncRNAs). In Dictyostelium discoideum (Social amoeba), this protein is Integrator complex subunit 2 homolog (ints2).